Reading from the N-terminus, the 239-residue chain is 2-C-methyl-D-erythritol 4-phosphate cytidylyltransferase (239 aa).

This sequence belongs to the IspD/TarI cytidylyltransferase family. IspD subfamily.

It catalyses the reaction 2-C-methyl-D-erythritol 4-phosphate + CTP + H(+) = 4-CDP-2-C-methyl-D-erythritol + diphosphate. Its pathway is isoprenoid biosynthesis; isopentenyl diphosphate biosynthesis via DXP pathway; isopentenyl diphosphate from 1-deoxy-D-xylulose 5-phosphate: step 2/6. Its function is as follows. Catalyzes the formation of 4-diphosphocytidyl-2-C-methyl-D-erythritol from CTP and 2-C-methyl-D-erythritol 4-phosphate (MEP). The chain is 2-C-methyl-D-erythritol 4-phosphate cytidylyltransferase from Acinetobacter baylyi (strain ATCC 33305 / BD413 / ADP1).